The primary structure comprises 36 residues: Serine protease inhibitor 2 (36 aa).

The region spanning E1 to Q36 is the Pacifastin domain. Cystine bridges form between C4–C19, C14–C34, and C17–C29.

Belongs to the protease inhibitor I19 family. As to expression, expressed in hemolymph.

It localises to the secreted. Its function is as follows. Probable serine protease inhibitor. This Melanoplus sanguinipes (Migratory grasshopper) protein is Serine protease inhibitor 2.